Reading from the N-terminus, the 284-residue chain is NAD kinase (284 aa).

The Proton acceptor role is filled by Asp-67. NAD(+) is bound by residues 67-68 (DG), 141-142 (ND), Arg-152, Lys-169, Asp-171, 182-187 (TGYSLS), and Gln-241.

The protein belongs to the NAD kinase family. A divalent metal cation serves as cofactor.

The protein resides in the cytoplasm. The catalysed reaction is NAD(+) + ATP = ADP + NADP(+) + H(+). In terms of biological role, involved in the regulation of the intracellular balance of NAD and NADP, and is a key enzyme in the biosynthesis of NADP. Catalyzes specifically the phosphorylation on 2'-hydroxyl of the adenosine moiety of NAD to yield NADP. This chain is NAD kinase, found in Geobacter sulfurreducens (strain ATCC 51573 / DSM 12127 / PCA).